Reading from the N-terminus, the 428-residue chain is Glutamate-1-semialdehyde 2,1-aminomutase (428 aa).

Lys267 bears the N6-(pyridoxal phosphate)lysine mark.

Belongs to the class-III pyridoxal-phosphate-dependent aminotransferase family. HemL subfamily. As to quaternary structure, homodimer. Pyridoxal 5'-phosphate is required as a cofactor.

It is found in the cytoplasm. It carries out the reaction (S)-4-amino-5-oxopentanoate = 5-aminolevulinate. It participates in porphyrin-containing compound metabolism; protoporphyrin-IX biosynthesis; 5-aminolevulinate from L-glutamyl-tRNA(Glu): step 2/2. The protein is Glutamate-1-semialdehyde 2,1-aminomutase of Flavobacterium johnsoniae (strain ATCC 17061 / DSM 2064 / JCM 8514 / BCRC 14874 / CCUG 350202 / NBRC 14942 / NCIMB 11054 / UW101) (Cytophaga johnsonae).